A 35-amino-acid polypeptide reads, in one-letter code: Turgencin-B (35 aa).

A methionine sulfoxide mark is found at M5 and M9. 3 cysteine pairs are disulfide-bonded: C7–C31, C11–C27, and C16–C24. A Glycine amide modification is found at G35.

Post-translationally, oxidation likely reduces antimicrobial activity against Gram-positive bacteria and Gram-negative bacteria.

It localises to the secreted. Its function is as follows. Has antimicrobial activity against Gram-positive bacteria (C.glutamicum ATCC 13032 (MIC=1.6 uM) and B.subtilis ATCC 23857 (MIC=1.6 uM)) and Gram-negative bacteria (E.coli ATCC 25922 (MIC=12.5 uM) and P.aeruginosa ATCC 27853 (MIC=25.0 uM)). Displays very low activity against the Gram-positive bacteria S.aureus ATCC 9144 (MIC&gt;100 uM). This chain is Turgencin-B, found in Synoicum turgens (Colonial ascidian).